Consider the following 122-residue polypeptide: Ribosome-binding factor A (122 aa).

The protein belongs to the RbfA family. Monomer. Binds 30S ribosomal subunits, but not 50S ribosomal subunits or 70S ribosomes.

Its subcellular location is the cytoplasm. In terms of biological role, one of several proteins that assist in the late maturation steps of the functional core of the 30S ribosomal subunit. Associates with free 30S ribosomal subunits (but not with 30S subunits that are part of 70S ribosomes or polysomes). Required for efficient processing of 16S rRNA. May interact with the 5'-terminal helix region of 16S rRNA. The protein is Ribosome-binding factor A of Caldanaerobacter subterraneus subsp. tengcongensis (strain DSM 15242 / JCM 11007 / NBRC 100824 / MB4) (Thermoanaerobacter tengcongensis).